We begin with the raw amino-acid sequence, 233 residues long: MSGTIFIISAPSGSGKSSLVNELRHVVPGLEFSISYTTRAPRGSEQNGREYFFVTREKFDAMLAADEFLEHAEVFGECYGTAKHFVTEALARGNDLVLDIDVQGAAQLKVKLPDAVGIFILPPSRKELEARLKRRNLSDHVAPEVIERRLKGAGKEIENFSHYDYILVNDNFETAVEQLRAIVLAERIRRSSTQISEENRAILEAAECCIRKNAMQRVQSILDSFKDATDPQP.

The region spanning 3 to 184 is the Guanylate kinase-like domain; it reads GTIFIISAPS…AVEQLRAIVL (182 aa). 10-17 contributes to the ATP binding site; that stretch reads APSGSGKS.

It belongs to the guanylate kinase family.

The protein localises to the cytoplasm. The catalysed reaction is GMP + ATP = GDP + ADP. Its function is as follows. Essential for recycling GMP and indirectly, cGMP. The protein is Guanylate kinase of Koribacter versatilis (strain Ellin345).